The following is a 337-amino-acid chain: MTDHALLLVNLGSPASTSVADVRRYLNQFLMDPYVIDLPWPVRRLLVSLILIKRPEQSAHAYASIWWDEGSPLVVLTRRLQAAMVEHWPHGPVEIAMRYGEPALPDVLERLAAQGVRKVTLAPLYPQFADSTVTTVVELAKQTIAERKLPLQTRILQPFYDHPDYIQALAASARPYLEQQYDHLLLSFHGLPERHLKKLDPSGNHDFQAADCCKDASAEMRAVCYRGQCLATAKAFAQKMGIPDGKWSVSFQSRLGRAKWIEPYTETRLDELGKAGVKKLLVMCPAFVADCIETLEEIGDRGKEQFIEAGGKELVLVPCLNDHPEWVRVLAGMCENA.

The Fe cation site is built by His-189 and Glu-293.

This sequence belongs to the ferrochelatase family.

The protein resides in the cytoplasm. The catalysed reaction is heme b + 2 H(+) = protoporphyrin IX + Fe(2+). It functions in the pathway porphyrin-containing compound metabolism; protoheme biosynthesis; protoheme from protoporphyrin-IX: step 1/1. Functionally, catalyzes the ferrous insertion into protoporphyrin IX. This is Ferrochelatase from Pseudomonas entomophila (strain L48).